We begin with the raw amino-acid sequence, 489 residues long: Glycogen synthase (489 aa).

R20 contacts ADP-alpha-D-glucose.

The protein belongs to the glycosyltransferase 1 family. Bacterial/plant glycogen synthase subfamily.

It catalyses the reaction [(1-&gt;4)-alpha-D-glucosyl](n) + ADP-alpha-D-glucose = [(1-&gt;4)-alpha-D-glucosyl](n+1) + ADP + H(+). The protein operates within glycan biosynthesis; glycogen biosynthesis. In terms of biological role, synthesizes alpha-1,4-glucan chains using ADP-glucose. The protein is Glycogen synthase of Chlorobium phaeobacteroides (strain DSM 266 / SMG 266 / 2430).